A 734-amino-acid polypeptide reads, in one-letter code: Photosystem I P700 chlorophyll a apoprotein A2 (734 aa).

8 helical membrane-spanning segments follow: residues 46–69, 135–158, 175–199, 273–291, 330–353, 369–395, 417–439, and 517–535; these read IFAS…FHVA, LYQG…LHLQ, LNHH…HVAI, IAHH…GHMY, LHFQ…QHMY, AALY…IFLI, AIIS…LYVH, and FLVH…LILV. [4Fe-4S] cluster contacts are provided by cysteine 559 and cysteine 568. 2 helical membrane-spanning segments follow: residues 575–596 and 643–665; these read AFYL…YWHW and LSVW…MFLI. Chlorophyll a-binding residues include histidine 654, methionine 662, and tyrosine 670. Tryptophan 671 is a binding site for phylloquinone. The chain crosses the membrane as a helical span at residues 707 to 727; it reads VVGLAHFTVGYFLTYAAFLIA.

The protein belongs to the PsaA/PsaB family. In terms of assembly, the PsaA/B heterodimer binds the P700 chlorophyll special pair and subsequent electron acceptors. PSI consists of a core antenna complex that captures photons, and an electron transfer chain that converts photonic excitation into a charge separation. The cyanobacterial PSI reaction center is composed of one copy each of PsaA,B,C,D,E,F,I,J,K,L,M and X, and forms trimeric complexes. The cofactor is PSI electron transfer chain: 5 chlorophyll a, 1 chlorophyll a', 2 phylloquinones and 3 4Fe-4S clusters. PSI core antenna: 90 chlorophyll a, 22 carotenoids, 3 phospholipids and 1 galactolipid. P700 is a chlorophyll a/chlorophyll a' dimer, A0 is one or more chlorophyll a, A1 is one or both phylloquinones and FX is a shared 4Fe-4S iron-sulfur center..

The protein resides in the cellular thylakoid membrane. The enzyme catalyses reduced [plastocyanin] + hnu + oxidized [2Fe-2S]-[ferredoxin] = oxidized [plastocyanin] + reduced [2Fe-2S]-[ferredoxin]. Functionally, psaA and PsaB bind P700, the primary electron donor of photosystem I (PSI), as well as the electron acceptors A0, A1 and FX. PSI is a plastocyanin/cytochrome c6-ferredoxin oxidoreductase, converting photonic excitation into a charge separation, which transfers an electron from the donor P700 chlorophyll pair to the spectroscopically characterized acceptors A0, A1, FX, FA and FB in turn. Oxidized P700 is reduced on the lumenal side of the thylakoid membrane by plastocyanin or cytochrome c6. The sequence is that of Photosystem I P700 chlorophyll a apoprotein A2 from Synechococcus elongatus (strain ATCC 33912 / PCC 7942 / FACHB-805) (Anacystis nidulans R2).